The chain runs to 427 residues: MKILVVGGGGREHAIAAALSRTTGTEIYAAMARKNPGIARLAKEICLTPETNLDRIAAFAQKTGVTHAFIGPEAPLEAGVVDRLSAAGVACAGPTKAAARIETDKAFCRNLMAEYKIEGNPAYRVFFDPKEAIAFVRDHDGDLAVKPIGLTGGKGVRIMGEQVDRAGAIEYIREINGGVVLEERLTGEEFTLQAFVDGTHIVPMPLVQDHKRAFEGDTGPNTGGMGSYTMPDHMLPFVTKKDLTAALSIMVSVVAAMAHKGYPYKGILYGQFMNTAQGPKVIEFNARFGDPEAMNVLTLLSSDLAEVVTGITEGTLSASNVSFEKAATVCKYLVPEGYPSAPKTNSPISIGETGSAITYYANVEEKNGTLQTLSSRTLAFVGKAPTLAEAEQIAENAASSVTGEVFHRRDIGTQALLDRRIAHMKEL.

Residues 109–313 enclose the ATP-grasp domain; the sequence is RNLMAEYKIE…LAEVVTGITE (205 aa). 136–191 contacts ATP; that stretch reads VRDHDGDLAVKPIGLTGGKGVRIMGEQVDRAGAIEYIREINGGVVLEERLTGEEFT. Residues Gln271, Glu283, and Asn285 each contribute to the Mg(2+) site. Residues Gln271, Glu283, and Asn285 each contribute to the Mn(2+) site.

Belongs to the GARS family. It depends on Mg(2+) as a cofactor. Mn(2+) serves as cofactor.

The enzyme catalyses 5-phospho-beta-D-ribosylamine + glycine + ATP = N(1)-(5-phospho-beta-D-ribosyl)glycinamide + ADP + phosphate + H(+). It functions in the pathway purine metabolism; IMP biosynthesis via de novo pathway; N(1)-(5-phospho-D-ribosyl)glycinamide from 5-phospho-alpha-D-ribose 1-diphosphate: step 2/2. This chain is Phosphoribosylamine--glycine ligase, found in Methanoregula boonei (strain DSM 21154 / JCM 14090 / 6A8).